The following is a 122-amino-acid chain: Small ribosomal subunit protein bS6 (122 aa).

It belongs to the bacterial ribosomal protein bS6 family.

Functionally, binds together with bS18 to 16S ribosomal RNA. This Neisseria gonorrhoeae (strain ATCC 700825 / FA 1090) protein is Small ribosomal subunit protein bS6.